The following is a 1719-amino-acid chain: Sodium channel protein type 4 subunit alpha B (1719 aa).

Over 1–126 (MRTLLPPVGS…IVAIKILIHS (126 aa)) the chain is Cytoplasmic. Positions 28-50 (QQIREEERKRTNAQVSEELPEPA) are disordered. The stretch at 108-431 (LLSPFNALRI…VVAMAYAEQN (324 aa)) is one I repeat. A helical membrane pass occupies residues 127 to 145 (LFSLFIMATILTNCAFMTL). At 146-152 (SDPPAWS) the chain is on the extracellular side. Residues 153-173 (KTMEYVFTFIYTFEATIKILS) form a helical membrane-spanning segment. At 174–187 (RGFCVGKFTFLKDP) the chain is on the cytoplasmic side. The helical transmembrane segment at 188 to 205 (WNWLDFMVISMAYLTELV) threads the bilayer. At 206–211 (DLGNVS) the chain is on the extracellular side. Residue Asn-209 is glycosylated (N-linked (GlcNAc...) asparagine). Residues 212 to 228 (VLRTFRVLRALKTITVI) form a helical membrane-spanning segment. The Cytoplasmic portion of the chain corresponds to 229 to 247 (PGLKTIVGALIQSVRKLAD). A helical transmembrane segment spans residues 248–267 (AMVLTVFCLSVFALIGLQLF). Residues 268–368 (MGNLRQKCVL…PNYGYTSYDS (101 aa)) are Extracellular-facing. Residues Cys-275 and Cys-337 are joined by a disulfide bond. Asn-285 and Asn-339 each carry an N-linked (GlcNAc...) asparagine glycan. A disulfide bridge links Cys-346 with Cys-352. The segment at residues 369–393 (FGWAFLALFRLMTQDFWENLFQLTL) is an intramembrane region (pore-forming). Topologically, residues 394–400 (RTAGKTY) are extracellular. A helical membrane pass occupies residues 401–421 (MIFFVVVIFLGSFYLINLILA). The Cytoplasmic segment spans residues 422 to 513 (VVAMAYAEQN…ECLYAIVMDP (92 aa)). The II repeat unit spans residues 495-766 (CCGCWRHLKE…QIAINRINRA (272 aa)). A helical transmembrane segment spans residues 514-532 (FVDLGITICIILNTVFMAM). Residues 533 to 543 (EHYPMSADFEE) lie on the Extracellular side of the membrane. The helical transmembrane segment at 544–563 (LLSVGNLVFTGIFTGEMVFK) threads the bilayer. At 564-577 (ILAMDPYFYFQVGW) the chain is on the cytoplasmic side. A helical membrane pass occupies residues 578-597 (NIFDSIIVTISLVELGLANV). At 598-599 (QG) the chain is on the extracellular side. Residues 600–617 (LSVLRSFRLMRVFKLAKS) traverse the membrane as a helical segment. At 618 to 633 (WPTLNMLIKIIGNSVG) the chain is on the cytoplasmic side. Residues 634-652 (ALGNLTLVLAIIVFIFAVV) traverse the membrane as a helical segment. Residues 653 to 681 (GMQLFGKNYKDCVCRISEDCVLPRWHMND) lie on the Extracellular side of the membrane. Residues Cys-666 and Cys-672 are joined by a disulfide bond. Positions 682–702 (FFHAFLIIFRVLCGEWIESMW) form an intramembrane region, pore-forming. Residues 703–713 (DCMEVSGQTMC) lie on the Extracellular side of the membrane. A disulfide bridge links Cys-704 with Cys-713. The helical transmembrane segment at 714–732 (LIVFMMVLVIGNLVVLNLF) threads the bilayer. The Cytoplasmic segment spans residues 733 to 919 (LALLLSSFSG…TCFSIVENNY (187 aa)). Acidic residues predominate over residues 834–845 (SDSDDSDYDEDK). The interval 834–862 (SDSDDSDYDEDKDSQCDESSVCSSVQKPE) is disordered. One copy of the III repeat lies at 900–1215 (RGKIWCNIRR…KKYYNAMKKL (316 aa)). The helical transmembrane segment at 920 to 937 (FESFIVFMILLSSGALAF) threads the bilayer. At 938 to 950 (EDIYLEKHQLIKS) the chain is on the extracellular side. A helical membrane pass occupies residues 951 to 969 (ILEYADKVFTYVFVMEMVL). The Cytoplasmic portion of the chain corresponds to 970-983 (KWFAYGFKSYFSNA). The chain crosses the membrane as a helical span at residues 984–1002 (WCWLDFLIVDVSLVSLTAN). At 1003–1010 (ILGYSELG) the chain is on the extracellular side. Residues 1011–1029 (AIKSLRTLRALRPLRALSR) form a helical membrane-spanning segment. The Cytoplasmic portion of the chain corresponds to 1030-1046 (FEGMRVVVNALVGAVPS). Residues 1047–1066 (IFNVLLVCLIFWLIFSIMGV) traverse the membrane as a helical segment. At 1067 to 1119 (NLFAGKFSYCFNETSQEIIDTKVVDNKTECIALIKANFTEVRWKNVKVNYDNV) the chain is on the extracellular side. Cys-1076 and Cys-1096 are oxidised to a cystine. Residues Asn-1078 and Asn-1092 are each glycosylated (N-linked (GlcNAc...) asparagine). The segment at residues 1120–1141 (GIGYLSLLQVATFKGWTDIMYA) is an intramembrane region (pore-forming). Residues 1142–1158 (AVDSRDVESQPIYEVNL) lie on the Extracellular side of the membrane. A helical membrane pass occupies residues 1159–1180 (YMYLYFVIFIIFGSFFTLNLFI). Over 1181–1243 (GVIIDNFNQQ…LVFDLVTKQI (63 aa)) the chain is Cytoplasmic. An important for rapid channel inactivation region spans residues 1199-1201 (IFM). The stretch at 1224–1521 (VPRPENPFQG…WEKFDPDASQ (298 aa)) is one IV repeat. Residues 1244 to 1261 (FDVFIMVLICLNMVTMMV) form a helical membrane-spanning segment. The Extracellular portion of the chain corresponds to 1262–1272 (ETDEQSDKKEE). The chain crosses the membrane as a helical span at residues 1273–1291 (VLYWINVVFILIFTTECTL). Residues 1292-1303 (KIIALRRHYFSI) are Cytoplasmic-facing. The chain crosses the membrane as a helical span at residues 1304-1321 (GWNIFDFVVVILSILGLL). The Extracellular portion of the chain corresponds to 1322–1334 (LADIIEKYFVSPT). A helical membrane pass occupies residues 1335–1351 (LFRVIRLARIGRVLRLI). Residues 1352–1370 (RGAKGIRTLLFALMMSLPA) are Cytoplasmic-facing. Residues 1371–1388 (LFNIGLLLFLIMFIFSIF) traverse the membrane as a helical segment. Residues 1389 to 1410 (GMSNFAYVKKEALIDDMFNFET) are Extracellular-facing. Residues 1411 to 1433 (FGNSMICLFMITTSAGWDGLLSP) constitute an intramembrane region (pore-forming). At 1434-1462 (IMNTPPDCDPNVENPGTTVRGNCGSPAIG) the chain is on the extracellular side. Cysteines 1441 and 1456 form a disulfide. The helical transmembrane segment at 1463–1485 (IAFFSTYIIMSFLVVVNMFIAII) threads the bilayer. The Cytoplasmic segment spans residues 1486 to 1719 (LENFNVATEE…QERDQRETSV (234 aa)). An IQ domain is found at 1615-1644 (EEVAATVIQRAYRKYLLLRTVRLASFMYRE).

The protein belongs to the sodium channel (TC 1.A.1.10) family. Nav1.4/SCN4A subfamily. As to quaternary structure, voltage-gated sodium (Nav) channels consist of an ion-conducting alpha subunit which is functional on its own associated with regulatory beta subunits.

It is found in the cell membrane. It carries out the reaction Na(+)(in) = Na(+)(out). In terms of biological role, pore-forming subunit of a voltage-gated sodium (Nav) channel that directly mediates the depolarizing phase of action potentials in excitable membranes. Navs, also called VGSCs (voltage-gated sodium channels) or VDSCs (voltage-dependent sodium channels), operate by switching between closed and open conformations depending on the voltage difference across the membrane. In the open conformation they allow Na(+) ions to selectively pass through the pore, along their electrochemical gradient. The influx of Na+ ions provokes membrane depolarization, initiating the propagation of electrical signals throughout cells and tissues. The polypeptide is Sodium channel protein type 4 subunit alpha B (scn4ab) (Takifugu rubripes (Japanese pufferfish)).